The following is a 434-amino-acid chain: Enolase (434 aa).

Positions 158 and 167 each coordinate substrate. Glutamate 210 acts as the Proton donor in catalysis. 3 residues coordinate Mg(2+): aspartate 245, glutamate 294, and aspartate 319. The substrate site is built by glutamate 294 and aspartate 319. Catalysis depends on lysine 344, which acts as the Proton acceptor. Substrate-binding positions include 371–374 (SHRS) and lysine 395.

This sequence belongs to the enolase family. Homodimer. Requires Mg(2+) as cofactor.

It is found in the cytoplasm. The enzyme catalyses (2R)-2-phosphoglycerate = phosphoenolpyruvate + H2O. The protein operates within carbohydrate degradation; glycolysis; pyruvate from D-glyceraldehyde 3-phosphate: step 4/5. The sequence is that of Enolase from Doryteuthis pealeii (Longfin inshore squid).